The sequence spans 592 residues: Potassium-transporting ATPase potassium-binding subunit (592 aa).

13 consecutive transmembrane segments (helical) span residues 6 to 26 (WLET…FGTY), 67 to 87 (ACAM…MLLL), 136 to 156 (GFAV…IAAI), 179 to 199 (LYIL…QGVI), 283 to 303 (LSNI…TYTF), 312 to 332 (QGWA…GVFY), 359 to 379 (FGLA…CGAV), 389 to 409 (IGGM…GGVG), 411 to 431 (GLYT…LMIG), 450 to 470 (ITTV…AMIL), 489 to 511 (LYAF…GNTL), 519 to 539 (VAML…AGGL), and 559 to 579 (FALW…FPAL).

It belongs to the KdpA family. The system is composed of three essential subunits: KdpA, KdpB and KdpC.

The protein localises to the cell inner membrane. Its function is as follows. Part of the high-affinity ATP-driven potassium transport (or Kdp) system, which catalyzes the hydrolysis of ATP coupled with the electrogenic transport of potassium into the cytoplasm. This subunit binds the periplasmic potassium ions and delivers the ions to the membrane domain of KdpB through an intramembrane tunnel. This is Potassium-transporting ATPase potassium-binding subunit from Geotalea uraniireducens (strain Rf4) (Geobacter uraniireducens).